Here is a 315-residue protein sequence, read N- to C-terminus: Cytochrome f (315 aa).

The N-terminal stretch at 1 to 36 (MKQSLLSVLTKKSLRLLAALFLVVTSVFSLPQAAQA) is a signal peptide. Heme-binding residues include Phe-37, Cys-57, Cys-60, and His-61. A helical transmembrane segment spans residues 281 to 301 (IKWLMVFFSAIMISQTLLVLK).

Belongs to the cytochrome f family. In terms of assembly, the 4 large subunits of the cytochrome b6-f complex are cytochrome b6, subunit IV (17 kDa polypeptide, PetD), cytochrome f and the Rieske protein, while the 4 small subunits are PetG, PetL, PetM and PetN. The complex functions as a dimer. It depends on heme as a cofactor.

It is found in the cellular thylakoid membrane. Its function is as follows. Component of the cytochrome b6-f complex, which mediates electron transfer between photosystem II (PSII) and photosystem I (PSI), cyclic electron flow around PSI, and state transitions. The chain is Cytochrome f from Acaryochloris marina (strain MBIC 11017).